The primary structure comprises 158 residues: Large ribosomal subunit protein uL11 (158 aa).

Belongs to the universal ribosomal protein uL11 family. As to quaternary structure, part of the ribosomal stalk of the 50S ribosomal subunit. Interacts with L10 and the large rRNA to form the base of the stalk. L10 forms an elongated spine to which L12 dimers bind in a sequential fashion forming a multimeric L10(L12)X complex.

Forms part of the ribosomal stalk which helps the ribosome interact with GTP-bound translation factors. The sequence is that of Large ribosomal subunit protein uL11 from Methanoculleus marisnigri (strain ATCC 35101 / DSM 1498 / JR1).